An 895-amino-acid chain; its full sequence is Procollagen lysyl hydroxylase and glycosyltransferase (895 aa).

The tract at residues 1–194 (MISRTYVINL…PSDEFIPIMH (194 aa)) is lysyl hydroxylase region. Positions 537–895 (YYFYISGDCI…KRYILVSFVN (359 aa)) are glucosyl transferase region. A Fe2OG dioxygenase domain is found at 805–895 (DINLAFVVKY…KRYILVSFVN (91 aa)). Fe cation-binding residues include His-825, Asp-827, and His-877. The active site involves Arg-887.

The cofactor is Fe cation. L-ascorbate serves as cofactor.

The enzyme catalyses L-lysyl-[collagen] + 2-oxoglutarate + O2 = (5R)-5-hydroxy-L-lysyl-[collagen] + succinate + CO2. In terms of biological role, displays two enzymatic activities involved in procollagen processing. Forms hydroxylysine residues in -Xaa-Lys-Gly- sequences in collagens. These hydroxylysines are subsequentially glucosylated by a glucosyltransferase activity. Collagen post-translationally modified is detected in mimivirus virion. In Acanthamoeba polyphaga (Amoeba), this protein is Procollagen lysyl hydroxylase and glycosyltransferase.